The sequence spans 556 residues: Potassium-transporting ATPase potassium-binding subunit (556 aa).

12 helical membrane-spanning segments follow: residues Ala3–Leu23, Ala57–Leu77, Gly129–Met149, Leu172–Pro192, Leu247–Phe267, Trp278–Ala298, Leu319–Val339, Leu346–Gly366, Gly371–Gly391, Leu408–Ile428, Phe486–Pro506, and Gly516–Phe536.

The protein belongs to the KdpA family. In terms of assembly, the system is composed of three essential subunits: KdpA, KdpB and KdpC.

It is found in the cell inner membrane. Functionally, part of the high-affinity ATP-driven potassium transport (or Kdp) system, which catalyzes the hydrolysis of ATP coupled with the electrogenic transport of potassium into the cytoplasm. This subunit binds the periplasmic potassium ions and delivers the ions to the membrane domain of KdpB through an intramembrane tunnel. The chain is Potassium-transporting ATPase potassium-binding subunit from Paramagnetospirillum magneticum (strain ATCC 700264 / AMB-1) (Magnetospirillum magneticum).